The chain runs to 497 residues: Cytochrome P450 26A1 (497 aa).

Heme is bound at residue Cys-442.

It belongs to the cytochrome P450 family. Requires heme as cofactor. As to expression, expressed in most fetal and adult tissues with highest levels in adult liver, heart, pituitary gland, adrenal gland, placenta and regions of the brain. Expressed at high levels in lung, pancreas, skin and uterus (at protein level). Lower expression level is detected in spleen, kidney, intestine and adipose tissue (at protein level).

The protein localises to the endoplasmic reticulum membrane. Its subcellular location is the microsome membrane. The catalysed reaction is all-trans-retinoate + reduced [NADPH--hemoprotein reductase] + O2 = all-trans-(4S)-hydroxyretinoate + oxidized [NADPH--hemoprotein reductase] + H2O + H(+). It catalyses the reaction all-trans-(4S)-hydroxyretinoate + reduced [NADPH--hemoprotein reductase] + O2 = all-trans-(4S,16)-dihydroxyretinoate + oxidized [NADPH--hemoprotein reductase] + H2O + H(+). The enzyme catalyses all-trans-retinoate + reduced [NADPH--hemoprotein reductase] + O2 = all-trans-18-hydroxyretinoate + oxidized [NADPH--hemoprotein reductase] + H2O + H(+). In terms of biological role, a cytochrome P450 monooxygenase involved in the metabolism of retinoates (RAs), the active metabolites of vitamin A, and critical signaling molecules in animals. RAs exist as at least four different isomers: all-trans-RA (atRA), 9-cis-RA, 13-cis-RA, and 9,13-dicis-RA, where atRA is considered to be the biologically active isomer, although 9-cis-RA and 13-cis-RA also have activity. Catalyzes the hydroxylation of atRA primarily at C-4 and C-18, thereby contributing to the regulation of atRA homeostasis and signaling. Hydroxylation of atRA limits its biological activity and initiates a degradative process leading to its eventual elimination. Involved in the convertion of atRA to all-trans-4-oxo-RA. Able to metabolize other RAs such as 9-cis, 13-cis and 9,13-di-cis RA. Can oxidize all-trans-13,14-dihydroretinoate (DRA) to metabolites which could include all-trans-4-oxo-DRA, all-trans-4-hydroxy-DRA, all-trans-5,8-epoxy-DRA, and all-trans-18-hydroxy-DRA. May play a role in the oxidative metabolism of xenobiotics such as tazarotenic acid. The sequence is that of Cytochrome P450 26A1 from Homo sapiens (Human).